Consider the following 110-residue polypeptide: MDDNNQATTLSNDPAVNAPDTATLGRDKGKATQDPAPTDTSMDEGESDESENEDIVKEDEDGGDDLAPIDSSNIISGRRTRGKTIDFVDAAQKLKDDEGEDDEDDEDFEP.

The span at 1–14 (MDDNNQATTLSNDP) shows a compositional bias: polar residues. The segment at 1–110 (MDDNNQATTL…DDEDDEDFEP (110 aa)) is disordered. Acidic residues-rich tracts occupy residues 41-64 (SMDE…DGGD) and 97-110 (DEGE…DFEP).

It belongs to the CHZ1 family. In terms of assembly, forms a heterotrimer with H2A.Z-H2B, stabilizing the association of the histone dimer. Also, with a lower affinity, forms a heterotrimer with H2A-H2B.

The protein resides in the nucleus. Forms a chaperone-bound H2A.Z-H2B complex that acts as a source for SWR1 complex-dependent H2A to H2A.Z histone replacement in chromatin. The protein is Histone H2A.Z-specific chaperone chz1 (chz1) of Aspergillus oryzae (strain ATCC 42149 / RIB 40) (Yellow koji mold).